The chain runs to 239 residues: MPLGHIMRLDLEKIALEYIVPCLHEVGFCYLDNFLGEVVGDCVLERVKQLHCTGALRDGQLAGPRAGVSKRHLRGDQITWIGGNEEGCEAISFLLSLIDRLVLYCGSRLGKYYVKERSKAMVACYPGNGTGYVRHVDNPNGDGRCITCIYYLNKNWDAKLHGGILRIFPEGKSFIADVEPIFDRLLFFWSDRRNPHEVQPSYATRYAMTVWYFDAEERAEAKKKFRNLTRKTESALTED.

Positions 62 to 73 (AGPRAGVSKRHL) are beta(2)beta(3) 'finger-like' loop. The interval 88–104 (CEAISFLLSLIDRLVLY) is required for interaction with ADRB2. The region spanning 116 to 214 (ERSKAMVACY…RYAMTVWYFD (99 aa)) is the Fe2OG dioxygenase domain. Fe cation-binding residues include histidine 135, aspartate 137, and histidine 196. Arginine 205 contributes to the 2-oxoglutarate binding site.

Interacts with BCL2 (via its BH4 domain); the interaction disrupts the BAX-BCL4 complex inhibiting the anti-apoptotic activity of BCL2. Interacts with WDR83; the interaction leads to almost complete elimination of HIF-mediated reporter activity. Interacts with ADRB2; the interaction hydroxylates ADRB2 facilitating its ubiquitination by the VHL-E3 ligase complex. Interacts with PAX2; the interaction targets PAX2 for destruction. Interacts with PKM; the interaction hydroxylates PKM in hypoxia. Interacts with LIMD1, WTIP and AJUBA. Fe(2+) serves as cofactor. L-ascorbate is required as a cofactor. Post-translationally, ubiquitinated by SIAH1 and/or SIAH2 in response to the unfolded protein response (UPR), leading to its degradation. As to expression, widely expressed at low levels. Expressed at higher levels in adult heart (cardiac myocytes, aortic endothelial cells and coronary artery smooth muscle), lung and placenta, and in fetal spleen, heart and skeletal muscle. Also expressed in pancreas. Localized to pancreatic acini and islet cells.

It localises to the nucleus. Its subcellular location is the cytoplasm. The catalysed reaction is L-prolyl-[protein] + 2-oxoglutarate + O2 = trans-4-hydroxy-L-prolyl-[protein] + succinate + CO2. The enzyme catalyses L-prolyl-[hypoxia-inducible factor alpha subunit] + 2-oxoglutarate + O2 = trans-4-hydroxy-L-prolyl-[hypoxia-inducible factor alpha subunit] + succinate + CO2. Activated in cardiovascular cells and Hela cells following exposure to hypoxia. Inhibited by polynitrogen compounds probably by chelation to Fe(2+) ions. Functionally, prolyl hydroxylase that mediates hydroxylation of proline residues in target proteins, such as PKM, TELO2, ATF4 and HIF1A. Target proteins are preferentially recognized via a LXXLAP motif. Cellular oxygen sensor that catalyzes, under normoxic conditions, the post-translational formation of 4-hydroxyproline in hypoxia-inducible factor (HIF) alpha proteins. Hydroxylates a specific proline found in each of the oxygen-dependent degradation (ODD) domains (N-terminal, NODD, and C-terminal, CODD) of HIF1A. Also hydroxylates HIF2A. Has a preference for the CODD site for both HIF1A and HIF2A. Hydroxylation on the NODD site by EGLN3 appears to require prior hydroxylation on the CODD site. Hydroxylated HIFs are then targeted for proteasomal degradation via the von Hippel-Lindau ubiquitination complex. Under hypoxic conditions, the hydroxylation reaction is attenuated allowing HIFs to escape degradation resulting in their translocation to the nucleus, heterodimerization with HIF1B, and increased expression of hypoxy-inducible genes. ELGN3 is the most important isozyme in limiting physiological activation of HIFs (particularly HIF2A) in hypoxia. Also hydroxylates PKM in hypoxia, limiting glycolysis. Under normoxia, hydroxylates and regulates the stability of ADRB2. Regulator of cardiomyocyte and neuronal apoptosis. In cardiomyocytes, inhibits the anti-apoptotic effect of BCL2 by disrupting the BAX-BCL2 complex. In neurons, has a NGF-induced proapoptotic effect, probably through regulating CASP3 activity. Also essential for hypoxic regulation of neutrophilic inflammation. Plays a crucial role in DNA damage response (DDR) by hydroxylating TELO2, promoting its interaction with ATR which is required for activation of the ATR/CHK1/p53 pathway. Also mediates hydroxylation of ATF4, leading to decreased protein stability of ATF4. In Homo sapiens (Human), this protein is Prolyl hydroxylase EGLN3.